The chain runs to 356 residues: Uroporphyrinogen decarboxylase (356 aa).

Residues 27–31 (RQAGR), aspartate 77, tyrosine 154, threonine 209, and histidine 327 contribute to the substrate site.

Belongs to the uroporphyrinogen decarboxylase family. Homodimer.

It is found in the cytoplasm. It carries out the reaction uroporphyrinogen III + 4 H(+) = coproporphyrinogen III + 4 CO2. Its pathway is porphyrin-containing compound metabolism; protoporphyrin-IX biosynthesis; coproporphyrinogen-III from 5-aminolevulinate: step 4/4. Functionally, catalyzes the decarboxylation of four acetate groups of uroporphyrinogen-III to yield coproporphyrinogen-III. The polypeptide is Uroporphyrinogen decarboxylase (Hahella chejuensis (strain KCTC 2396)).